A 446-amino-acid polypeptide reads, in one-letter code: ATP-dependent protease ATPase subunit HslU (446 aa).

ATP-binding positions include Ile-18, Gly-60–Glu-65, Asp-259, Glu-324, and Arg-396.

Belongs to the ClpX chaperone family. HslU subfamily. As to quaternary structure, a double ring-shaped homohexamer of HslV is capped on each side by a ring-shaped HslU homohexamer. The assembly of the HslU/HslV complex is dependent on binding of ATP.

Its subcellular location is the cytoplasm. Its function is as follows. ATPase subunit of a proteasome-like degradation complex; this subunit has chaperone activity. The binding of ATP and its subsequent hydrolysis by HslU are essential for unfolding of protein substrates subsequently hydrolyzed by HslV. HslU recognizes the N-terminal part of its protein substrates and unfolds these before they are guided to HslV for hydrolysis. This Vibrio atlanticus (strain LGP32) (Vibrio splendidus (strain Mel32)) protein is ATP-dependent protease ATPase subunit HslU.